We begin with the raw amino-acid sequence, 20 residues long: Phospholipase A2 D5 (20 aa).

It depends on Ca(2+) as a cofactor. In terms of processing, contains seven disulfide bonds. As to expression, expressed by the venom gland.

The protein resides in the secreted. It catalyses the reaction a 1,2-diacyl-sn-glycero-3-phosphocholine + H2O = a 1-acyl-sn-glycero-3-phosphocholine + a fatty acid + H(+). PLA2 catalyzes the calcium-dependent hydrolysis of the 2-acyl groups in 3-sn-phosphoglycerides. The chain is Phospholipase A2 D5 from Micrurus pyrrhocryptus (Coral snake).